Here is a 371-residue protein sequence, read N- to C-terminus: Serine/threonine-protein kinase 17B (371 aa).

Residues 33–293 form the Protein kinase domain; the sequence is TLTPKELGRG…AESCLSHSWL (261 aa). Residues 39–47 and Lys62 contribute to the ATP site; that span reads LGRGKFAVV. Asp158 acts as the Proton acceptor in catalysis. The segment at 308 to 345 is disordered; sequence SESSQTQDLSLRSSEDKTPKSCNGSCGDREDKENIPED. A compositionally biased stretch (polar residues) spans 309 to 319; sequence ESSQTQDLSLR.

It belongs to the protein kinase superfamily. CAMK Ser/Thr protein kinase family. DAP kinase subfamily. Interacts with CHP1; the interaction induces CHP1 to translocate from the Golgi to the nucleus. Autophosphorylated. In terms of tissue distribution, highly expressed in thymus, spleen, and testis, lower levels present in the brain.

It localises to the nucleus. The protein localises to the cell membrane. It is found in the endoplasmic reticulum-Golgi intermediate compartment. It carries out the reaction L-seryl-[protein] + ATP = O-phospho-L-seryl-[protein] + ADP + H(+). The enzyme catalyses L-threonyl-[protein] + ATP = O-phospho-L-threonyl-[protein] + ADP + H(+). Acts as a positive regulator of apoptosis. Phosphorylates myosin light chains. This chain is Serine/threonine-protein kinase 17B (Stk17b), found in Rattus norvegicus (Rat).